The following is a 397-amino-acid chain: Argininosuccinate synthase (397 aa).

8-16 provides a ligand contact to ATP; that stretch reads AYSGGLDTS. The L-citrulline site is built by tyrosine 86 and serine 91. Glycine 116 contributes to the ATP binding site. Residues threonine 118, asparagine 122, and aspartate 123 each coordinate L-aspartate. Position 122 (asparagine 122) interacts with L-citrulline. L-citrulline is bound by residues arginine 126, serine 175, serine 184, glutamate 260, and tyrosine 272.

It belongs to the argininosuccinate synthase family. Type 1 subfamily. As to quaternary structure, homotetramer.

It localises to the cytoplasm. The enzyme catalyses L-citrulline + L-aspartate + ATP = 2-(N(omega)-L-arginino)succinate + AMP + diphosphate + H(+). It participates in amino-acid biosynthesis; L-arginine biosynthesis; L-arginine from L-ornithine and carbamoyl phosphate: step 2/3. The chain is Argininosuccinate synthase from Clostridium botulinum (strain Kyoto / Type A2).